The primary structure comprises 495 residues: Sugar phosphate exchanger 3 (495 aa).

The chain crosses the membrane as a helical span at residues 16–36; the sequence is FSHHHMVVFLLTFFSYSLLHA. N-linked (GlcNAc...) asparagine glycosylation is present at N58. The next 5 membrane-spanning stretches (helical) occupy residues 82–102, 114–134, 148–168, 178–198, and 210–230; these read TLFL…GLFI, WVLS…GTLT, LWIV…AVMG, VVFG…ACLA, and FLVT…GLLV. The N-linked (GlcNAc...) asparagine glycan is linked to N267. Transmembrane regions (helical) follow at residues 298 to 318, 334 to 354, 358 to 378, 387 to 407, 429 to 449, and 453 to 473; these read LAYA…PFYL, IWYD…SDML, APVL…YSRS, LLMA…SSAI, GIVD…VSLI, and LGWM…VLFI.

It belongs to the major facilitator superfamily. Organophosphate:Pi antiporter (OPA) (TC 2.A.1.4) family. Interacts with ATRAID; the interaction is direct and both proteins are mutually dependent for their stability. In terms of processing, glycosylated.

Its subcellular location is the endoplasmic reticulum membrane. It localises to the lysosome membrane. In terms of biological role, unlike the other SLC37 members, lacks glucose-6-phosphate antiporter activity. In osteoclasts, forms a transporter complex with ATRAID for nitrogen-containing-bisphophonates (N-BPs) required for releasing N-BP molecules that have trafficked to lysosomes through fluid-phase endocytosis into the cytosol. The polypeptide is Sugar phosphate exchanger 3 (SLC37A3) (Bos taurus (Bovine)).